We begin with the raw amino-acid sequence, 431 residues long: Glutamate-1-semialdehyde 2,1-aminomutase 1 (431 aa).

The residue at position 268 (K268) is an N6-(pyridoxal phosphate)lysine.

It belongs to the class-III pyridoxal-phosphate-dependent aminotransferase family. HemL subfamily. In terms of assembly, homodimer. Requires pyridoxal 5'-phosphate as cofactor.

The protein localises to the cytoplasm. The catalysed reaction is (S)-4-amino-5-oxopentanoate = 5-aminolevulinate. Its pathway is porphyrin-containing compound metabolism; protoporphyrin-IX biosynthesis; 5-aminolevulinate from L-glutamyl-tRNA(Glu): step 2/2. The sequence is that of Glutamate-1-semialdehyde 2,1-aminomutase 1 from Bacillus pumilus (strain SAFR-032).